The following is an 843-amino-acid chain: Probable inorganic carbon transporter subunit DabA 2 (843 aa).

C352, D354, H536, and C551 together coordinate Zn(2+).

It belongs to the inorganic carbon transporter (TC 9.A.2) DabA family. In terms of assembly, forms a complex with DabB. Requires Zn(2+) as cofactor.

The protein localises to the cell inner membrane. In terms of biological role, part of an energy-coupled inorganic carbon pump. The sequence is that of Probable inorganic carbon transporter subunit DabA 2 from Bradyrhizobium sp. (strain BTAi1 / ATCC BAA-1182).